Consider the following 409-residue polypeptide: 2,3-bisphosphoglycerate-independent phosphoglycerate mutase 1 (409 aa).

Residues 163–173 (SDADPKVEGKP) show a composition bias toward basic and acidic residues. The tract at residues 163-184 (SDADPKVEGKPPKKIKALDGSP) is disordered.

This sequence belongs to the BPG-independent phosphoglycerate mutase family. A-PGAM subfamily.

The catalysed reaction is (2R)-2-phosphoglycerate = (2R)-3-phosphoglycerate. Its pathway is carbohydrate degradation; glycolysis; pyruvate from D-glyceraldehyde 3-phosphate: step 3/5. Catalyzes the interconversion of 2-phosphoglycerate and 3-phosphoglycerate. The protein is 2,3-bisphosphoglycerate-independent phosphoglycerate mutase 1 (apgM1) of Methanothermobacter thermautotrophicus (strain ATCC 29096 / DSM 1053 / JCM 10044 / NBRC 100330 / Delta H) (Methanobacterium thermoautotrophicum).